Reading from the N-terminus, the 463-residue chain is Phosphoglucosamine mutase (463 aa).

Residue S110 is the Phosphoserine intermediate of the active site. The Mg(2+) site is built by S110, D255, D257, and D259. Residue S110 is modified to Phosphoserine.

It belongs to the phosphohexose mutase family. The cofactor is Mg(2+). Post-translationally, activated by phosphorylation.

The catalysed reaction is alpha-D-glucosamine 1-phosphate = D-glucosamine 6-phosphate. Catalyzes the conversion of glucosamine-6-phosphate to glucosamine-1-phosphate. This is Phosphoglucosamine mutase from Koribacter versatilis (strain Ellin345).